The sequence spans 73 residues: Capsid protein G8P (73 aa).

Residues 1 to 23 (MKKSLVLKASVAVATLVPMLSFA) form the signal peptide. The Periplasmic portion of the chain corresponds to 24-44 (AEGDDPAKAAFDSLQASATEY). The chain crosses the membrane as a helical span at residues 45–65 (IGYAWAMVVVIVGATIGIKLF). Topologically, residues 66–73 (KKFTSKAS) are cytoplasmic.

This sequence belongs to the inovirus capsid protein family. As to quaternary structure, homomultimerizes. There are several thousands of this protein in the phage capsid.

It localises to the virion. Its subcellular location is the host membrane. Self assembles to form a helical capsid wrapping up the viral genomic DNA. The capsid displays a filamentous structure with a length of 760-1950 nm and a width of 6-8 nm. The virion assembly and budding take place at the host inner membrane. The chain is Capsid protein G8P (VIII) from Escherichia coli (Bacteriophage f1).